The chain runs to 515 residues: Maturase K (515 aa).

This sequence belongs to the intron maturase 2 family. MatK subfamily.

The protein resides in the plastid. It localises to the chloroplast. Usually encoded in the trnK tRNA gene intron. Probably assists in splicing its own and other chloroplast group II introns. The sequence is that of Maturase K from Zingiber officinale (Ginger).